We begin with the raw amino-acid sequence, 223 residues long: Immediate early response gene 2 protein (223 aa).

Position 1 is an N-acetylmethionine (M1). Residues 63-172 (AALPSDPRLH…PPAQAEGAFP (110 aa)) form a disordered region. A compositionally biased stretch (basic and acidic residues) spans 69–78 (PRLHPPREAE). The segment covering 125–138 (SSLSDGGDAGLVPS) has biased composition (low complexity).

Belongs to the IER family. Expressed in activated T-cells (at protein level). Expression increases in metastatic tumor cells (at protein level).

The protein resides in the cytoplasm. Its subcellular location is the nucleus. DNA-binding protein that seems to act as a transcription factor. Involved in the regulation of neuronal differentiation, acts upon JNK-signaling pathway activation and plays a role in neurite outgrowth in hippocampal cells. May mediate with FIBP FGF-signaling in the establishment of laterality in the embryo. Promotes cell motility, seems to stimulate tumor metastasis. This is Immediate early response gene 2 protein from Homo sapiens (Human).